The following is a 569-amino-acid chain: Ribosome-inactivating protein SNAI' (569 aa).

The first 28 residues, 1–28, serve as a signal peptide directing secretion; the sequence is MKVVATILYLVVLAICGLGIHGAHPTHS. Residue N40 is glycosylated (N-linked (GlcNAc...) asparagine). Residue E201 is part of the active site. 3 disulfides stabilise this stretch: C286–C311, C328–C347, and C369–C381. Ricin B-type lectin domains are found at residues 315–435 and 437–565; these read EEVT…WIVG and VEPL…WIAS. A 1-alpha repeat occupies 325 to 365; the sequence is DGFCAEVKNGDEKDGTPVQLSSCGEQSNQQWTFSTDGTIQS. The 1-beta repeat unit spans residues 366-401; the sequence is LGKCLTTSSSVMIYNCKVVPPESTKWVVSIDGTITN. A 1-gamma repeat occupies 404 to 436; that stretch reads SGLVLTAPKAAEGTLVSLEKNVHAARQGWIVGN. A 2-alpha repeat occupies 448–488; that stretch reads EQMCLETNPGNNDVSLGDCSVKSASKVDQKWALYGDGTIRV. Cystine bridges form between C451–C466 and C495–C512. The stretch at 492 to 530 is one 2-beta repeat; the sequence is RSLCVTSEGKSSNEPIIILKCLGWANQRWVFNTDGTISN. One copy of the 2-gamma repeat lies at 533-566; sequence SKLVMHVDQNDVPLRKIILSHPSGTSNQQWIAST.

This sequence in the N-terminal section; belongs to the ribosome-inactivating protein family. Type 2 RIP subfamily. In terms of assembly, disulfide-linked dimer of A and B chains.

The enzyme catalyses Endohydrolysis of the N-glycosidic bond at one specific adenosine on the 28S rRNA.. The A chain is responsible for inhibiting protein synthesis through the catalytic inactivation of 60S ribosomal subunits by removing adenine from position 4,324 of 28S rRNA. The B chain binds to cell receptors and probably facilitates the entry into the cell of the A chain; B chains are also responsible for cell agglutination (lectin activity). Agglutination is inhibited by Neu5Ac(alpha2,6)lactose, and N-linked glycoproteins such as fetuin and orosomucoid. The chain is Ribosome-inactivating protein SNAI' from Sambucus nigra (European elder).